The primary structure comprises 202 residues: MEQYLSLFIRSIFLENMALFYFLGMCTFLAVSKKVKTAMGLGVAVIVVLTISVPVNQLVYANILAPGALGWAGFPDTDLSFLSFLTFIGVIAALVQILEMTLDKFFPALYNALGIFLPLITVNCAIFGGVAFAVQRDYTFTESIFYGAGSGAGWALAITLLAAVREKLKYADMPEGVRGLGSVFMIAGLMALGFQSFSGVSI.

Transmembrane regions (helical) follow at residues serine 11–valine 31, methionine 39–valine 59, leucine 79–glutamate 99, glycine 114–valine 134, isoleucine 144–valine 164, and leucine 180–valine 200.

It belongs to the NqrDE/RnfAE family. Composed of six subunits; NqrA, NqrB, NqrC, NqrD, NqrE and NqrF.

It is found in the cell inner membrane. It catalyses the reaction a ubiquinone + n Na(+)(in) + NADH + H(+) = a ubiquinol + n Na(+)(out) + NAD(+). Functionally, NQR complex catalyzes the reduction of ubiquinone-1 to ubiquinol by two successive reactions, coupled with the transport of Na(+) ions from the cytoplasm to the periplasm. NqrA to NqrE are probably involved in the second step, the conversion of ubisemiquinone to ubiquinol. This is Na(+)-translocating NADH-quinone reductase subunit E from Pseudoalteromonas atlantica (strain T6c / ATCC BAA-1087).